Consider the following 619-residue polypeptide: CLPTM1-like membrane protein cnrB (619 aa).

The disordered stretch occupies residues 1-21 (MNNQGGAVAANGQRPQAQQQQ). Low complexity predominate over residues 9 to 21 (AANGQRPQAQQQQ). Transmembrane regions (helical) follow at residues 26 to 46 (IMGIISTLIRFMAIYYIASFA), 324 to 344 (WILGLTLIVSVLHTIFEFLAF), 360 to 380 (LSVKTITLNCVCMGIIFLYLL), 384 to 404 (TSYMILASSGFGFLVEFWKLG), 445 to 465 (YLSWLLFPLVIGTSIYSLYYH), and 474 to 496 (VVSSLVRTVYTFEFIMMTPQLFI). The disordered stretch occupies residues 566-619 (SEEAEEVQQQDKKEIKEKVEEREEEKQEEEEEEKEKEEESTSSSKVTKRKTKKV). A compositionally biased stretch (basic and acidic residues) spans 574–590 (QQDKKEIKEKVEEREEE). Positions 591-605 (KQEEEEEEKEKEEES) are enriched in acidic residues.

This sequence belongs to the CLPTM1 family.

The protein localises to the membrane. The sequence is that of CLPTM1-like membrane protein cnrB (cnrB) from Dictyostelium discoideum (Social amoeba).